The sequence spans 992 residues: UPF0182 protein Mb3215c (992 aa).

A run of 7 helical transmembrane segments spans residues 17-39, 59-81, 113-135, 169-191, 212-229, 255-277, and 284-306; these read RILI…LIDA, LATR…FGGL, LVGI…SYWA, LMLS…AHYI, LVSL…AYWL, VLPA…FSAI, and IPAI…WPLI. The interval 906–938 is disordered; that stretch reads PTEAAVPPSPAANPPPPASGPQPPPVTAAPPVP. Positions 912–938 are enriched in pro residues; it reads PPSPAANPPPPASGPQPPPVTAAPPVP.

This sequence belongs to the UPF0182 family.

It is found in the cell membrane. The protein is UPF0182 protein Mb3215c of Mycobacterium bovis (strain ATCC BAA-935 / AF2122/97).